We begin with the raw amino-acid sequence, 227 residues long: 2,3-bisphosphoglycerate-dependent phosphoglycerate mutase (227 aa).

Substrate contacts are provided by residues 7 to 14 (RHGFSEWN), 20 to 21 (TG), Arg59, 86 to 89 (ERHY), Lys97, 113 to 114 (RR), and 182 to 183 (GN). His8 (tele-phosphohistidine intermediate) is an active-site residue. Glu86 serves as the catalytic Proton donor/acceptor.

Belongs to the phosphoglycerate mutase family. BPG-dependent PGAM subfamily. As to quaternary structure, homodimer.

It catalyses the reaction (2R)-2-phosphoglycerate = (2R)-3-phosphoglycerate. It participates in carbohydrate degradation; glycolysis; pyruvate from D-glyceraldehyde 3-phosphate: step 3/5. Its function is as follows. Catalyzes the interconversion of 2-phosphoglycerate and 3-phosphoglycerate. This is 2,3-bisphosphoglycerate-dependent phosphoglycerate mutase from Haemophilus influenzae (strain ATCC 51907 / DSM 11121 / KW20 / Rd).